Here is a 310-residue protein sequence, read N- to C-terminus: Syndecan-1 (310 aa).

Residues 1-22 (MRRAALWLWLCALALSLQPALP) form the signal peptide. Residues 23 to 254 (QIVATNLPPE…GLLDRKEVLG (232 aa)) are Extracellular-facing. 2 disordered regions span residues 27–100 (TNLP…EGPK) and 114–212 (LTAR…QDFT). Over residues 32-42 (EDQDGSGDDSD) the composition is skewed to acidic residues. O-linked (Xyl...) (chondroitin sulfate) serine glycosylation occurs at S37. N43 carries N-linked (GlcNAc...) asparagine glycosylation. O-linked (Xyl...) (heparan sulfate) serine glycosylation is found at S45 and S47. Residues 55 to 75 (ITLSQQTPSTWKDTQLLTAIP) show a composition bias toward polar residues. A compositionally biased stretch (basic and acidic residues) spans 117 to 127 (REQEATPRPRE). Low complexity predominate over residues 128–151 (TTQLPTTHLASTTTATTAQEPATS). Positions 153–164 (PHRDMQPGHHET) are enriched in basic and acidic residues. S206 and S216 each carry an O-linked (Xyl...) (chondroitin sulfate) serine glycan. Residues 255–275 (GVIAGGLVGLIFAVCLVGFML) form a helical membrane-spanning segment. Topologically, residues 276-310 (YRMKKKDEGSYSLEEPKQANGGAYQKPTKQEEFYA) are cytoplasmic. Residues 284–310 (GSYSLEEPKQANGGAYQKPTKQEEFYA) form a disordered region. The residue at position 285 (S285) is a Phosphoserine.

Belongs to the syndecan proteoglycan family. In terms of assembly, interacts with CDCP1. Interacts (via C-terminus) with TIAM1 (via PDZ domain). Interacts with MDK. In terms of processing, shedding is enhanced by a number of factors such as heparanase, thrombin or EGF. Also by stress and wound healing. PMA-mediated shedding is inhibited by TIMP3. As to expression, detected in placenta (at protein level). Detected in fibroblasts (at protein level).

It localises to the membrane. Its subcellular location is the secreted. It is found in the extracellular exosome. In terms of biological role, cell surface proteoglycan that contains both heparan sulfate and chondroitin sulfate and that links the cytoskeleton to the interstitial matrix. Regulates exosome biogenesis in concert with SDCBP and PDCD6IP. Able to induce its own expression in dental mesenchymal cells and also in the neighboring dental epithelial cells via an MSX1-mediated pathway. The protein is Syndecan-1 of Homo sapiens (Human).